Reading from the N-terminus, the 808-residue chain is Protein NLP5 (808 aa).

Residues 56–68 (PTQDTSNSLSQMY) show a composition bias toward polar residues. The disordered stretch occupies residues 56-83 (PTQDTSNSLSQMYGQDCPERSSLEDQNQ). In terms of domain architecture, RWP-RK spans 536-617 (NRVTEKKRTK…IDSVEGVSGH (82 aa)). The tract at residues 660 to 680 (SPGSSCSHSSSCSSETQVIKE) is disordered. Residues 663 to 673 (SSCSHSSSCSS) are compositionally biased toward low complexity. Positions 710 to 793 (FLRVKVSYEE…QTIKLLLQLS (84 aa)) constitute a PB1 domain.

The protein localises to the nucleus. Functionally, probable transcription factor. The chain is Protein NLP5 (NLP5) from Arabidopsis thaliana (Mouse-ear cress).